The sequence spans 788 residues: Ciliated left-right organizer metallopeptidase (788 aa).

Residues 1–20 (MLLLLLLLLLLPPLVLRVAA) form the signal peptide. Over 21-735 (SRCLHDETQK…DHNPSMTHLR (715 aa)) the chain is Extracellular. Positions 40–56 (SQLPSKSRSSSLTLPSS) are enriched in low complexity. A disordered region spans residues 40 to 59 (SQLPSKSRSSSLTLPSSRDP). His-305 is a Zn(2+) binding site. The active site involves Glu-306. A Zn(2+)-binding site is contributed by His-309. N-linked (GlcNAc...) asparagine glycosylation occurs at Asn-333. Residue His-385 coordinates Zn(2+). Residues Asn-425, Asn-491, Asn-524, and Asn-713 are each glycosylated (N-linked (GlcNAc...) asparagine). The helical transmembrane segment at 736-756 (LSMGLCLMLLILVGVMGTTAY) threads the bilayer. The Cytoplasmic segment spans residues 757–788 (QKRATLPVRPSASYHSPELHSTRVPVRGIREV). A disordered region spans residues 767–788 (SASYHSPELHSTRVPVRGIREV).

The protein belongs to the peptidase M8 family. It depends on Zn(2+) as a cofactor.

Its subcellular location is the membrane. Putative metalloproteinase that plays a role in left-right patterning process. The sequence is that of Ciliated left-right organizer metallopeptidase from Homo sapiens (Human).